The chain runs to 691 residues: Dynamin-1-like protein (691 aa).

The 280-residue stretch at 22-301 (IIQLPQIAVV…LMHHIRDCLP (280 aa)) folds into the Dynamin-type G domain. The tract at residues 32–39 (GTQSSGKS) is G1 motif. Position 32-40 (32-40 (GTQSSGKSS)) interacts with GTP. A G2 motif region spans residues 58–60 (VTR). A G3 motif region spans residues 145 to 148 (DLPG). Positions 214-217 (TKLD) are G4 motif. Residues 214 to 220 (TKLDLMD) and 245 to 248 (NRSQ) each bind GTP. The segment at 244–247 (VNRS) is G5 motif. The segment at 343 to 488 (YCNTIEGTAK…NEMVHNLVAI (146 aa)) is middle domain. Basic and acidic residues-rich tracts occupy residues 522-531 (LPTSVPRDKM) and 551-563 (KKGDEGQGEEKTK). The interval 522 to 573 (LPTSVPRDKMAGGAQAEQEGGTGTWRGMLKKGDEGQGEEKTKLQSSIPASPQ) is disordered. In terms of domain architecture, GED spans 599–690 (CEVIERLIKS…VIAEIRETHL (92 aa)). The interval 609–623 (YFLIVRKNIQDSVPK) is important for homodimerization.

It belongs to the TRAFAC class dynamin-like GTPase superfamily. Dynamin/Fzo/YdjA family. In terms of assembly, homotetramer; dimerizes through the N-terminal GTP-middle region of one molecule binding to the GED domain of another DNM1L molecule. Oligomerizes in a GTP-dependent manner to form membrane-associated tubules with a spiral pattern.

Its subcellular location is the cytoplasm. The protein localises to the cytosol. It is found in the golgi apparatus. It localises to the endomembrane system. The protein resides in the mitochondrion outer membrane. Its subcellular location is the peroxisome. The protein localises to the membrane. It is found in the clathrin-coated pit. It localises to the cytoplasmic vesicle. The protein resides in the secretory vesicle. Its subcellular location is the synaptic vesicle membrane. The catalysed reaction is GTP + H2O = GDP + phosphate + H(+). Its function is as follows. Functions in mitochondrial and peroxisomal division. Mediates membrane fission through oligomerization into membrane-associated tubular structures that wrap around the scission site to constrict and sever the mitochondrial membrane through a GTP hydrolysis-dependent mechanism. The specific recruitment at scission sites is mediated by membrane receptors like MFF, MIEF1 and MIEF2 for mitochondrial membranes. While the recruitment by the membrane receptors is GTP-dependent, the following hydrolysis of GTP induces the dissociation from the receptors and allows DNM1L filaments to curl into closed rings that are probably sufficient to sever a double membrane. May play a role in the circadian control of mitochondrial ATP production. The chain is Dynamin-1-like protein from Danio rerio (Zebrafish).